Here is a 917-residue protein sequence, read N- to C-terminus: Intercellular adhesion molecule 5 (917 aa).

The signal sequence occupies residues 1 to 31; it reads MPGPSPGLRRALLGLWAALGLGILGISAVAL. Residues 32-833 are Extracellular-facing; the sequence is EPFWADLQPR…RITVRVAGPW (802 aa). Ig-like C2-type domains lie at 48-130, 135-235, 242-329, 337-402, 408-486, 491-567, 572-651, 665-738, and 745-828; these read GGSL…PLPS, GENF…SLIA, DSER…LLTL, GKMV…SSEL, PRLD…VTLT, PALD…VAVT, PSFE…NRHG, PQMD…RTVT, and PVVA…ITVR. Asn-54 carries N-linked (GlcNAc...) (high mannose) asparagine glycosylation. Disulfide bonds link Cys-55-Cys-99 and Cys-59-Cys-103. 2 N-linked (GlcNAc...) asparagine glycosylation sites follow: Asn-74 and Asn-137. A disulfide bridge connects residues Cys-142 and Cys-198. Thr-182 is modified (phosphothreonine). N-linked (GlcNAc...) asparagine glycosylation is found at Asn-195, Asn-214, Asn-274, Asn-316, Asn-371, and Asn-397. Cys-249 and Cys-302 form a disulfide bridge. An intrachain disulfide couples Cys-344 to Cys-383. 3 disulfides stabilise this stretch: Cys-415–Cys-470, Cys-498–Cys-551, and Cys-579–Cys-644. Residues Asn-582 and Asn-645 are each glycosylated (N-linked (GlcNAc...) asparagine). Residues Cys-672 and Cys-724 are joined by a disulfide bond. N-linked (GlcNAc...) asparagine glycans are attached at residues Asn-762, Asn-793, and Asn-794. Cys-767 and Cys-812 are joined by a disulfide. Residues 834–854 traverse the membrane as a helical segment; that stretch reads LWVAVGGAAGGAALLAAGAGL. Over 855-917 the chain is Cytoplasmic; it reads AFYVQSTACK…EVFAIQLTSS (63 aa). Over residues 884–893 the composition is skewed to gly residues; that stretch reads GAGGTPGAEG. Residues 884–908 are disordered; that stretch reads GAGGTPGAEGGAETPGTAESPADGE.

The protein belongs to the immunoglobulin superfamily. ICAM family. Glycosylation at Asn-54 is critical for functional folding. As to expression, expressed on neurons in the most rostral segment of the mammalian brain, the telencephalon.

Its subcellular location is the membrane. Functionally, ICAM proteins are ligands for the leukocyte adhesion protein LFA-1 (integrin alpha-L/beta-2). This chain is Intercellular adhesion molecule 5 (Icam5), found in Mus musculus (Mouse).